Consider the following 268-residue polypeptide: MSGGLKAEAASFALPGATLVDRVDLTITQGELVAIVGPNGAGKSTLLRMLSGDLRPTSGTVSLDGRALADYPPRALAARRAMLAQHTTVSFPFSVEEIVAMGADIDPRKAAPLFDAALRDVGLDHFRHRDITTLSGGEQQRAHFARILVQLWSGEADAGPGLLLLDEPTSSLDIRHQLDLAETARRCARRGTTVIAILHDLNLAARFADRIIVLSGGRIAADGAPAAVLRHELIADVFDVALTVNTDVAGQPFVLPELADDRRAAAHA.

The region spanning L5–A241 is the ABC transporter domain. G37 to S44 lines the ATP pocket.

The protein belongs to the ABC transporter superfamily. Heme (hemin) importer (TC 3.A.1.14.5) family. In terms of assembly, the complex is composed of two ATP-binding proteins (HmuV), two transmembrane proteins (HmuU) and a solute-binding protein (HmuT).

The protein localises to the cell inner membrane. Its function is as follows. Part of the ABC transporter complex HmuTUV involved in hemin import. Responsible for energy coupling to the transport system. The polypeptide is Hemin import ATP-binding protein HmuV (Rhodopseudomonas palustris (strain ATCC BAA-98 / CGA009)).